The primary structure comprises 226 residues: MKVNHSISRFRPASWFEKTKIIPPQVYIFRNLEYGQVLYSQFPNFSQTQVDKLFVRPNWSNRKPSLRRDIWKCMCVVNLQNYKQSVHLYQNLCRLRYLRDVAQRKESDKLRKKDSNGHVWYSGQYRPTYCQEAVADLRESLLKVFENATPAEKQTVPAKKPSIYWEDPWRMGDKDKHWNYDVFNALGLEHKLIQRVGNIAREESVILKELAKLESHPTEQTEVSSQ.

The protein belongs to the mitochondrion-specific ribosomal protein mL67 family. In terms of assembly, component of the mitochondrial large ribosomal subunit (mt-LSU). Mature yeast 74S mitochondrial ribosomes consist of a small (37S) and a large (54S) subunit. The 37S small subunit contains a 15S ribosomal RNA (15S mt-rRNA) and 34 different proteins. The 54S large subunit contains a 21S rRNA (21S mt-rRNA) and 46 different proteins.

Its subcellular location is the nucleus. The protein resides in the mitochondrion. Its function is as follows. Component of the mitochondrial ribosome (mitoribosome), a dedicated translation machinery responsible for the synthesis of mitochondrial genome-encoded proteins, including at least some of the essential transmembrane subunits of the mitochondrial respiratory chain. The mitoribosomes are attached to the mitochondrial inner membrane and translation products are cotranslationally integrated into the membrane. mL67/MHR1 also has extraribosomal functions, being involved in regulation of mitochondrial DNA recombination, maintenance and repair, and generation of homoplasmic cells. mL67/MHR1 also acts as transcription factor involved in regulation of RNA polymerase II-dependent transcription. This Saccharomyces cerevisiae (strain ATCC 204508 / S288c) (Baker's yeast) protein is Large ribosomal subunit protein mL67 (MHR1).